The sequence spans 273 residues: Dermonecrotic toxin LhSicTox-alphaIA2biv (273 aa).

Residue H5 is part of the active site. Positions 25 and 27 each coordinate Mg(2+). H41 serves as the catalytic Nucleophile. 2 disulfide bridges follow: C45–C51 and C47–C190. D85 is a binding site for Mg(2+).

Belongs to the arthropod phospholipase D family. Class II subfamily. It depends on Mg(2+) as a cofactor. In terms of tissue distribution, expressed by the venom gland.

The protein localises to the secreted. It carries out the reaction an N-(acyl)-sphingosylphosphocholine = an N-(acyl)-sphingosyl-1,3-cyclic phosphate + choline. The catalysed reaction is an N-(acyl)-sphingosylphosphoethanolamine = an N-(acyl)-sphingosyl-1,3-cyclic phosphate + ethanolamine. The enzyme catalyses a 1-acyl-sn-glycero-3-phosphocholine = a 1-acyl-sn-glycero-2,3-cyclic phosphate + choline. It catalyses the reaction a 1-acyl-sn-glycero-3-phosphoethanolamine = a 1-acyl-sn-glycero-2,3-cyclic phosphate + ethanolamine. Functionally, dermonecrotic toxins cleave the phosphodiester linkage between the phosphate and headgroup of certain phospholipids (sphingolipid and lysolipid substrates), forming an alcohol (often choline) and a cyclic phosphate. This toxin acts on sphingomyelin (SM). It may also act on ceramide phosphoethanolamine (CPE), lysophosphatidylcholine (LPC) and lysophosphatidylethanolamine (LPE), but not on lysophosphatidylserine (LPS), and lysophosphatidylglycerol (LPG). It acts by transphosphatidylation, releasing exclusively cyclic phosphate products as second products. Induces dermonecrosis, hemolysis, increased vascular permeability, edema, inflammatory response, and platelet aggregation. The chain is Dermonecrotic toxin LhSicTox-alphaIA2biv from Loxosceles hirsuta (Recluse spider).